The chain runs to 241 residues: Probable FKBP-type peptidyl-prolyl cis-trans isomerase (241 aa).

The region spanning 150 to 241 (TDTVKVHYTG…VLDVNPKSEK (92 aa)) is the PPIase FKBP-type domain.

This sequence belongs to the FKBP-type PPIase family.

The enzyme catalyses [protein]-peptidylproline (omega=180) = [protein]-peptidylproline (omega=0). PPIases accelerate the folding of proteins. It catalyzes the cis-trans isomerization of proline imidic peptide bonds in oligopeptides. In Haemophilus influenzae (strain ATCC 51907 / DSM 11121 / KW20 / Rd), this protein is Probable FKBP-type peptidyl-prolyl cis-trans isomerase.